The chain runs to 458 residues: GTPase Der (458 aa).

2 EngA-type G domains span residues 4 to 169 and 178 to 353; these read PSIA…PKDF and VMMS…TQHR. GTP is bound by residues 10–17, 57–61, 120–123, 184–191, 231–235, and 296–299; these read GRPNVGKS, DTGGL, NKCE, DTAGI, and NKWD. In terms of domain architecture, KH-like spans 354–439; the sequence is MRVTTSVVNE…PIILLWRGKQ (86 aa).

This sequence belongs to the TRAFAC class TrmE-Era-EngA-EngB-Septin-like GTPase superfamily. EngA (Der) GTPase family. Associates with the 50S ribosomal subunit.

GTPase that plays an essential role in the late steps of ribosome biogenesis. The polypeptide is GTPase Der (Prochlorococcus marinus (strain MIT 9515)).